The sequence spans 644 residues: Kininogen-1 (644 aa).

The N-terminal stretch at 1–18 (MKLITILFLCSRLLLSLT) is a signal peptide. Gln19 bears the Pyrrolidone carboxylic acid; in mature form mark. The Cystatin kininogen-type 1 domain occupies 28–132 (CNDKDLFKAV…TQTCQITPAE (105 aa)). 9 disulfides stabilise this stretch: Cys28–Cys614, Cys83–Cys94, Cys107–Cys126, Cys142–Cys145, Cys206–Cys218, Cys229–Cys248, Cys264–Cys267, Cys328–Cys340, and Cys351–Cys370. Residue Asn48 is glycosylated (N-linked (GlcNAc...) (complex) asparagine). The tract at residues 120 to 153 (SVATQTCQITPAEGPVVTAQYDCLGCVHPISTQS) is O-glycosylated at one site only. The region spanning 151–254 (TQSPDLEPIL…SQNCDIYPGK (104 aa)) is the Cystatin kininogen-type 2 domain. An N-linked (GlcNAc...) asparagine glycan is attached at Asn169. Asn205 carries an N-linked (GlcNAc...) (complex) asparagine glycan. The Cystatin kininogen-type 3 domain maps to 273–376 (TNSPELEETL…TVNCQPLGMI (104 aa)). N-linked (GlcNAc...) (complex) asparagine glycosylation occurs at Asn294. Ser332 bears the Phosphoserine; by FAM20C mark. Position 383 is a 4-hydroxyproline; partial (Pro383). The tract at residues 387–555 (PFRSSRIGEI…TPIPSLAKPG (169 aa)) is disordered. Thr401 carries O-linked (GalNAc...) threonine glycosylation. Basic and acidic residues predominate over residues 418–434 (DSGKEQGHTRRHDWGHE). 3 consecutive repeats follow at residues 420 to 449 (GKEQ…KHER), 450 to 479 (DQGH…KFKL), and 480 to 510 (DDDL…KNKG). Basic residues predominate over residues 435-446 (KQRKHNLGHGHK). A compositionally biased stretch (basic and acidic residues) spans 477-493 (FKLDDDLEHQGGHVLDH). The segment covering 494 to 518 (GHKHKHGHGHGKHKNKGKKNGKHNG) has biased composition (basic residues). Residues 524-539 (LASSSEDSTTPSAQTQ) show a composition bias toward polar residues. Residues Thr533, Thr542, Thr546, Thr557, and Thr571 are each glycosylated (O-linked (GalNAc...) threonine). An O-linked (GalNAc...) serine glycan is attached at Ser577. O-linked (GalNAc...) threonine glycosylation is present at Thr628.

In terms of assembly, interacts (high molecular weight kininogen) (via amino acids 402-532) with triafestin-1 and triafestin-2, anticoagulant proteins from Triatoma infestans. Interacts (high molecular weight kininogen) (via amino acids 402-532) with short form salivary protein D7R1, an anticoagulant protein from Anopheles stephensi. Interacts (high molecular weight kininogen) (via amino acids 421-466 and 459-513) with haemaphysalin, an anticoagulant protein from Haemaphysalis longicornis. Bradykinin is inactivated by ACE, which removes the dipeptide Arg-Phe from its C-terminus. In terms of processing, bradykinin is released from kininogen by plasma kallikrein. Post-translationally, hydroxylation of Pro-383 occurs prior to the release of bradykinin. Phosphorylated by FAM20C in the extracellular medium. In terms of processing, N- and O-glycosylated. O-glycosylated with core 1 or possibly core 8 glycans. Post-translationally, (Microbial infection) Bradykinin is generated upon proteolytic cleavage by S.pyogenes SpeB to produce hypotension during septic shock. As to expression, secreted in plasma. T-kinin is detected in malignant ovarian, colon and breast carcinomas, but not in benign tumors.

It localises to the secreted. The protein resides in the extracellular space. Functionally, kininogens are inhibitors of thiol proteases. HMW-kininogen plays an important role in blood coagulation by helping to position optimally prekallikrein and factor XI next to factor XII; HMW-kininogen inhibits the thrombin- and plasmin-induced aggregation of thrombocytes. LMW-kininogen inhibits the aggregation of thrombocytes. LMW-kininogen is in contrast to HMW-kininogen not involved in blood clotting. The active peptide bradykinin is a potent vasodilatator that is released from HMW-kininogen shows a variety of physiological effects: (A) influence in smooth muscle contraction, (B) induction of hypotension, (C) natriuresis and diuresis, (D) decrease in blood glucose level, (E) it is a mediator of inflammation and causes (E1) increase in vascular permeability, (E2) stimulation of nociceptors (4E3) release of other mediators of inflammation (e.g. prostaglandins), (F) it has a cardioprotective effect (directly via bradykinin action, indirectly via endothelium-derived relaxing factor action). This chain is Kininogen-1 (KNG1), found in Homo sapiens (Human).